Here is a 446-residue protein sequence, read N- to C-terminus: DILAAFRVTPQPGVPPEEAGAAVAAESSTGTWTTVWTDGLTSLDRYKGRCYGIEPVPGEEDQYIAYVAYPLDLFEEGSVTNMFTSIVGNVFGFKALRALRLEDLRIPPAYIKTFQGPPHGIQVERDKLNKYGRPLLGCTIKPKLGLSAKNYGRAVYECLRGGLDFTKDDENVNSQPFMRWRDRFLFCAEAINKAQAETGEIKGHYLNATAGTCEEMIKRAVFARGLGVPIVMHDYLTGGFTANTSLAHYCRDNGLLLHIHRAMHAVIDRQKNHGIHFRVLRKALRMSGGDHIHSGTVVGKLEGERDITLGFVDLLRDDFIEKDRSXGIYFTQDWVSLPGVIPVASGGIHVWHMPALTEIFGGDSVLQFGGGTLGHPWGNAPGAVANRVALEACVQARNEGRDLAVEGNEIIREASKWSPELAAACEVWKEIRFNFKAVDTLDPLKS.

Asn-89 and Thr-139 together coordinate substrate. Lys-141 functions as the Proton acceptor in the catalytic mechanism. Lys-143 serves as a coordination point for substrate. Residues Lys-167, Asp-169, and Glu-170 each coordinate Mg(2+). Lys-167 bears the N6-carboxylysine mark. Catalysis depends on His-260, which acts as the Proton acceptor. Residues Arg-261, His-293, and Ser-345 each contribute to the substrate site.

This sequence belongs to the RuBisCO large chain family. Type I subfamily. In terms of assembly, heterohexadecamer of 8 large chains and 8 small chains; disulfide-linked. The disulfide link is formed within the large subunit homodimers. Requires Mg(2+) as cofactor. The disulfide bond which can form in the large chain dimeric partners within the hexadecamer appears to be associated with oxidative stress and protein turnover.

It localises to the plastid. The protein resides in the chloroplast. It catalyses the reaction 2 (2R)-3-phosphoglycerate + 2 H(+) = D-ribulose 1,5-bisphosphate + CO2 + H2O. The catalysed reaction is D-ribulose 1,5-bisphosphate + O2 = 2-phosphoglycolate + (2R)-3-phosphoglycerate + 2 H(+). RuBisCO catalyzes two reactions: the carboxylation of D-ribulose 1,5-bisphosphate, the primary event in carbon dioxide fixation, as well as the oxidative fragmentation of the pentose substrate in the photorespiration process. Both reactions occur simultaneously and in competition at the same active site. This chain is Ribulose bisphosphate carboxylase large chain, found in Exacum affine (Persian violet).